Here is a 454-residue protein sequence, read N- to C-terminus: Methylenetetrahydrofolate--tRNA-(uracil-5-)-methyltransferase TrmFO (454 aa).

9–14 (GAGLAG) is a binding site for FAD. Residues 432–454 (LERVSPPSRETGEPTGAEQVDLA) form a disordered region.

It belongs to the MnmG family. TrmFO subfamily. FAD serves as cofactor.

The protein resides in the cytoplasm. The catalysed reaction is uridine(54) in tRNA + (6R)-5,10-methylene-5,6,7,8-tetrahydrofolate + NADH + H(+) = 5-methyluridine(54) in tRNA + (6S)-5,6,7,8-tetrahydrofolate + NAD(+). It carries out the reaction uridine(54) in tRNA + (6R)-5,10-methylene-5,6,7,8-tetrahydrofolate + NADPH + H(+) = 5-methyluridine(54) in tRNA + (6S)-5,6,7,8-tetrahydrofolate + NADP(+). Functionally, catalyzes the folate-dependent formation of 5-methyl-uridine at position 54 (M-5-U54) in all tRNAs. The chain is Methylenetetrahydrofolate--tRNA-(uracil-5-)-methyltransferase TrmFO from Pelobacter propionicus (strain DSM 2379 / NBRC 103807 / OttBd1).